The primary structure comprises 305 residues: Probable 5-dehydro-4-deoxyglucarate dehydratase (305 aa).

It belongs to the DapA family.

The catalysed reaction is 5-dehydro-4-deoxy-D-glucarate + H(+) = 2,5-dioxopentanoate + CO2 + H2O. It functions in the pathway carbohydrate acid metabolism; D-glucarate degradation; 2,5-dioxopentanoate from D-glucarate: step 2/2. This chain is Probable 5-dehydro-4-deoxyglucarate dehydratase, found in Xanthomonas campestris pv. campestris (strain 8004).